Consider the following 197-residue polypeptide: MAGIGRLSTKGSVLLLCDMQEKFRPTIFQFTNVVSNAARLLQACRILNIPQILTEQYPKGLGPTVPELGAEGLKPHTKTSFSMMTESVQSSLKSMGDPQQVILCGIEAQACIACTAYDLLERGMEVHIVADAVSSRSQTDRLFALSRLRQSGVFLNTTEGVLLQLVQDAKHPNFKEIQKLLAHPSPDTGLLAFFSSL.

It belongs to the isochorismatase family.

The protein is Isochorismatase domain-containing protein 2 (isoc2) of Danio rerio (Zebrafish).